Reading from the N-terminus, the 256-residue chain is Small ribosomal subunit protein eS1 (256 aa).

An N-acetylalanine; partial modification is found at A2.

It belongs to the eukaryotic ribosomal protein eS1 family. As to quaternary structure, component of the small ribosomal subunit. Mature ribosomes consist of a small (40S) and a large (60S) subunit. The 40S subunit contains about 33 different proteins and 1 molecule of RNA (18S). The 60S subunit contains about 49 different proteins and 3 molecules of RNA (25S, 5.8S and 5S).

It localises to the cytoplasm. This chain is Small ribosomal subunit protein eS1, found in Fusarium vanettenii (strain ATCC MYA-4622 / CBS 123669 / FGSC 9596 / NRRL 45880 / 77-13-4) (Fusarium solani subsp. pisi).